The primary structure comprises 194 residues: Large ribosomal subunit protein uL6z/uL6y (194 aa).

Threonine 75 bears the Phosphothreonine mark.

Belongs to the universal ribosomal protein uL6 family.

The polypeptide is Large ribosomal subunit protein uL6z/uL6y (RPL9B) (Arabidopsis thaliana (Mouse-ear cress)).